The following is a 130-amino-acid chain: Small ribosomal subunit protein uS9 (130 aa).

It belongs to the universal ribosomal protein uS9 family.

This chain is Small ribosomal subunit protein uS9, found in Phytoplasma australiense.